We begin with the raw amino-acid sequence, 429 residues long: D-amino acid dehydrogenase (429 aa).

3–17 serves as a coordination point for FAD; that stretch reads VLILGSGVIGVTSAW.

It belongs to the DadA oxidoreductase family. FAD is required as a cofactor.

It catalyses the reaction a D-alpha-amino acid + A + H2O = a 2-oxocarboxylate + AH2 + NH4(+). In terms of biological role, oxidative deamination of D-amino acids. The polypeptide is D-amino acid dehydrogenase (Xanthomonas axonopodis pv. citri (strain 306)).